A 410-amino-acid chain; its full sequence is Multifunctional CCA protein (410 aa).

Residues G8 and R11 each coordinate ATP. CTP-binding residues include G8 and R11. Mg(2+) contacts are provided by E21 and D23. ATP is bound by residues R91, R137, and R140. CTP is bound by residues R91, R137, and R140. In terms of domain architecture, HD spans 228–329 (TGIHSLMTLR…VKLLEQVDAF (102 aa)).

This sequence belongs to the tRNA nucleotidyltransferase/poly(A) polymerase family. Bacterial CCA-adding enzyme type 1 subfamily. As to quaternary structure, monomer. Can also form homodimers and oligomers. Requires Mg(2+) as cofactor. Ni(2+) serves as cofactor.

It catalyses the reaction a tRNA precursor + 2 CTP + ATP = a tRNA with a 3' CCA end + 3 diphosphate. The enzyme catalyses a tRNA with a 3' CCA end + 2 CTP + ATP = a tRNA with a 3' CCACCA end + 3 diphosphate. Its function is as follows. Catalyzes the addition and repair of the essential 3'-terminal CCA sequence in tRNAs without using a nucleic acid template. Adds these three nucleotides in the order of C, C, and A to the tRNA nucleotide-73, using CTP and ATP as substrates and producing inorganic pyrophosphate. tRNA 3'-terminal CCA addition is required both for tRNA processing and repair. Also involved in tRNA surveillance by mediating tandem CCA addition to generate a CCACCA at the 3' terminus of unstable tRNAs. While stable tRNAs receive only 3'-terminal CCA, unstable tRNAs are marked with CCACCA and rapidly degraded. The chain is Multifunctional CCA protein from Legionella pneumophila subsp. pneumophila (strain Philadelphia 1 / ATCC 33152 / DSM 7513).